We begin with the raw amino-acid sequence, 588 residues long: Proteasome-associated ATPase (588 aa).

Basic and acidic residues predominate over residues 1-10 (MAAHDDDMNR). The disordered stretch occupies residues 1–23 (MAAHDDDMNRGIRPGRGSEDPAG). A coiled-coil region spans residues 47-94 (RILEERIVELQTNLAGVSAQNERLAGTLREARDQIVALKEEVDRLAQP). Residue 276-281 (GCGKTL) participates in ATP binding. The interval 587–588 (YL) is docks into pockets in the proteasome alpha-ring.

Belongs to the AAA ATPase family. In terms of assembly, homohexamer. Assembles into a hexameric ring structure that caps the 20S proteasome core. Strongly interacts with the prokaryotic ubiquitin-like protein Pup through a hydrophobic interface; the interacting region of ARC lies in its N-terminal coiled-coil domain. There is one Pup binding site per ARC hexamer ring. Upon ATP-binding, the C-terminus of ARC interacts with the alpha-rings of the proteasome core, possibly by binding to the intersubunit pockets.

Its pathway is protein degradation; proteasomal Pup-dependent pathway. ATPase which is responsible for recognizing, binding, unfolding and translocation of pupylated proteins into the bacterial 20S proteasome core particle. May be essential for opening the gate of the 20S proteasome via an interaction with its C-terminus, thereby allowing substrate entry and access to the site of proteolysis. Thus, the C-termini of the proteasomal ATPase may function like a 'key in a lock' to induce gate opening and therefore regulate proteolysis. The chain is Proteasome-associated ATPase from Streptomyces coelicolor (strain ATCC BAA-471 / A3(2) / M145).